We begin with the raw amino-acid sequence, 263 residues long: Endonuclease 8 (263 aa).

Residue proline 2 is the Schiff-base intermediate with DNA of the active site. Residue glutamate 3 is the Proton donor of the active site. Lysine 53 functions as the Proton donor; for beta-elimination activity in the catalytic mechanism. Residues glutamine 70, arginine 125, and asparagine 169 each contribute to the DNA site. Residues 229–263 (KVFHRDGELCERCGGIIEKTTLSSRPFYWCPGCQH) form an FPG-type zinc finger. Arginine 253 serves as the catalytic Proton donor; for delta-elimination activity.

This sequence belongs to the FPG family. It depends on Zn(2+) as a cofactor.

The enzyme catalyses 2'-deoxyribonucleotide-(2'-deoxyribose 5'-phosphate)-2'-deoxyribonucleotide-DNA = a 3'-end 2'-deoxyribonucleotide-(2,3-dehydro-2,3-deoxyribose 5'-phosphate)-DNA + a 5'-end 5'-phospho-2'-deoxyribonucleoside-DNA + H(+). Its function is as follows. Involved in base excision repair of DNA damaged by oxidation or by mutagenic agents. Acts as a DNA glycosylase that recognizes and removes damaged bases. Has a preference for oxidized pyrimidines, such as thymine glycol, 5,6-dihydrouracil and 5,6-dihydrothymine. Has AP (apurinic/apyrimidinic) lyase activity and introduces nicks in the DNA strand. Cleaves the DNA backbone by beta-delta elimination to generate a single-strand break at the site of the removed base with both 3'- and 5'-phosphates. The protein is Endonuclease 8 of Escherichia coli O157:H7.